The primary structure comprises 259 residues: Pimeloyl-[acyl-carrier protein] methyl ester esterase (259 aa).

Substrate contacts are provided by residues Trp18, 78 to 79 (SL), and 139 to 143 (FLALD). The active-site Nucleophile is Ser78. Catalysis depends on residues Asp203 and His231. His231 contacts substrate.

The protein belongs to the AB hydrolase superfamily. Carboxylesterase BioH family. In terms of assembly, monomer.

It localises to the cytoplasm. It catalyses the reaction 6-carboxyhexanoyl-[ACP] methyl ester + H2O = 6-carboxyhexanoyl-[ACP] + methanol + H(+). Its pathway is cofactor biosynthesis; biotin biosynthesis. The physiological role of BioH is to remove the methyl group introduced by BioC when the pimeloyl moiety is complete. It allows to synthesize pimeloyl-ACP via the fatty acid synthetic pathway through the hydrolysis of the ester bonds of pimeloyl-ACP esters. This is Pimeloyl-[acyl-carrier protein] methyl ester esterase from Stenotrophomonas maltophilia (strain K279a).